The following is a 92-amino-acid chain: UPF0250 protein Avin_08440 (92 aa).

This sequence belongs to the UPF0250 family.

This is UPF0250 protein Avin_08440 from Azotobacter vinelandii (strain DJ / ATCC BAA-1303).